We begin with the raw amino-acid sequence, 351 residues long: Peroxisomal membrane protein PEX14 (351 aa).

Residues 54 to 75 are disordered; it reads KARTGTVQASPSQQSVVPPRPP. Low complexity predominate over residues 60–70; sequence VQASPSQQSVV. An SH3-binding motif is present at residues 83–91; the sequence is APPLPERDW. The segment at 243-351 is disordered; that stretch reads APQLSTPPSE…RGIPAWQLNA (109 aa). Residues 245–258 are compositionally biased toward polar residues; that stretch reads QLSTPPSESTSRQS. A compositionally biased stretch (basic and acidic residues) spans 283-293; it reads VLSREKDKDVN. The span at 294-303 shows a compositional bias: polar residues; that stretch reads SDSIAQYEQR. Over residues 320 to 334 the composition is skewed to low complexity; sequence SASNGGSSTTSGVAG.

Belongs to the peroxin-14 family. As to quaternary structure, interacts with PEX13 (via SH3 domain); forming the PEX13-PEX14 docking complex. Interacts with PEX5 (via WxxxF/Y motifs).

It is found in the peroxisome membrane. Its function is as follows. Component of the PEX13-PEX14 docking complex, a translocon channel that specifically mediates the import of peroxisomal cargo proteins bound to PEX5 receptor. The PEX13-PEX14 docking complex forms a large import pore which can be opened to a diameter of about 9 nm. Mechanistically, PEX5 receptor along with cargo proteins associates with the PEX14 subunit of the PEX13-PEX14 docking complex in the cytosol, leading to the insertion of the receptor into the organelle membrane with the concomitant translocation of the cargo into the peroxisome matrix. This chain is Peroxisomal membrane protein PEX14, found in Pichia angusta (Yeast).